The chain runs to 276 residues: MIILIYLFVLVWEEAQGWGFKNGIFHNSIWLEQAAGVYHREARSGKYKLTYAEAKAVCEFEGGRLATYKQLEAARKIGFHVCAAGWMAKGRVGYPIVKPGSNCGFGKTGIIDYGIRLNRSERWDAYCYNPHAKECGGVFTDPKRIFKSPGFPNEYDDNQICYWHIRLKYGQRIHLSFLNFDLEYDPGCLADYVEIYDSYDDVHGFVGRYCGDELPEDIISTGNVMTLKFLSDASVTAGGFQIKYVTVDPASKSSQGKNTSTVSGNKNFLAGRFSHL.

The first 17 residues, 1–17 (MIILIYLFVLVWEEAQG), serve as a signal peptide directing secretion. A Link domain is found at 36–129 (GVYHREARSG…SERWDAYCYN (94 aa)). Intrachain disulfides connect cysteine 58–cysteine 127, cysteine 82–cysteine 103, and cysteine 135–cysteine 161. Residue asparagine 118 is glycosylated (N-linked (GlcNAc...) asparagine). A CUB domain is found at 135-247 (CGGVFTDPKR…GGFQIKYVTV (113 aa)). The Ca(2+) site is built by glutamate 183, aspartate 191, aspartate 232, serine 234, and valine 235. A disulfide bridge connects residues cysteine 188 and cysteine 210. N-linked (GlcNAc...) asparagine glycosylation occurs at asparagine 258.

As to quaternary structure, interacts (via Link domain) with inter-alpha-inhibitor (I-alpha-I) component bikunin. Interacts with ITIH2/HC2; this interaction is required for transesterification of the HC to hyaluronan. Interacts (via Link and CUB domains) with ITIH1. Chondroitin sulfate may be required for the stability of the complex. Interacts (via Link domain) with various C-X-C and C-C chemokines including PF4, CXCL8, CXCL11, CXCL12, CCL2, CCL7, CCL19, CCL21, and CCL27; this interaction interferes with chemokine binding to glycosaminoglycans. Interacts (primarily via Link domain) with BMP2; this interaction is inhibited by hyaluronan. Interacts (via both Link and CUB domains) with TNFSF11. Interacts (via CUB domain) with FN1 (via type III repeats 9-14); this interaction enhances fibronectin fibril assembly. TNFAIP6 may act as a bridging molecule between FN1 and THBS1. As to expression, vascular smooth muscle cells.

The protein resides in the secreted. Major regulator of extracellular matrix organization during tissue remodeling. Catalyzes the transfer of a heavy chain (HC) from inter-alpha-inhibitor (I-alpha-I) complex to hyaluronan. Cleaves the ester bond between the C-terminus of the HC and GalNAc residue of the chondroitin sulfate chain in I-alpha-I complex followed by transesterification of the HC to hyaluronan. In the process, potentiates the antiprotease function of I-alpha-I complex through release of free bikunin. Acts as a catalyst in the formation of hyaluronan-HC oligomers and hyaluronan-rich matrix surrounding the cumulus cell-oocyte complex, a necessary step for oocyte fertilization. Assembles hyaluronan in pericellular matrices that serve as platforms for receptor clustering and signaling. Enables binding of hyaluronan deposited on the surface of macrophages to LYVE1 on lymphatic endothelium and facilitates macrophage extravasation. Alters hyaluronan binding to functionally latent CD44 on vascular endothelium, switching CD44 into an active state that supports leukocyte rolling. Modulates the interaction of chemokines with extracellular matrix components and proteoglycans on endothelial cell surface, likely preventing chemokine gradient formation. In a negative feedback mechanism, may limit excessive neutrophil recruitment at inflammatory sites by antagonizing the association of CXCL8 with glycosaminoglycans on vascular endothelium. Has a role in osteogenesis and bone remodeling. Inhibits BMP2-dependent differentiation of mesenchymal stem cell to osteoblasts. Protects against bone erosion during inflammation by inhibiting TNFSF11/RANKL-dependent osteoclast activation. This Oryctolagus cuniculus (Rabbit) protein is Tumor necrosis factor-inducible gene 6 protein (TNFAIP6).